We begin with the raw amino-acid sequence, 142 residues long: uncharacterized protein (142 aa).

This is an uncharacterized protein from Caenorhabditis elegans.